A 343-amino-acid polypeptide reads, in one-letter code: Probable dual-specificity RNA methyltransferase RlmN (343 aa).

Glu91 serves as the catalytic Proton acceptor. Residues 97-326 (HPGRITACIS…AEIRQEKGSD (230 aa)) enclose the Radical SAM core domain. A disulfide bridge links Cys104 with Cys331. [4Fe-4S] cluster is bound by residues Cys111, Cys115, and Cys118. Residues 158-159 (GE), Ser190, 213-215 (SLH), and Asn289 each bind S-adenosyl-L-methionine. The active-site S-methylcysteine intermediate is the Cys331.

It belongs to the radical SAM superfamily. RlmN family. [4Fe-4S] cluster serves as cofactor.

Its subcellular location is the cytoplasm. It carries out the reaction adenosine(2503) in 23S rRNA + 2 reduced [2Fe-2S]-[ferredoxin] + 2 S-adenosyl-L-methionine = 2-methyladenosine(2503) in 23S rRNA + 5'-deoxyadenosine + L-methionine + 2 oxidized [2Fe-2S]-[ferredoxin] + S-adenosyl-L-homocysteine. The enzyme catalyses adenosine(37) in tRNA + 2 reduced [2Fe-2S]-[ferredoxin] + 2 S-adenosyl-L-methionine = 2-methyladenosine(37) in tRNA + 5'-deoxyadenosine + L-methionine + 2 oxidized [2Fe-2S]-[ferredoxin] + S-adenosyl-L-homocysteine. Functionally, specifically methylates position 2 of adenine 2503 in 23S rRNA and position 2 of adenine 37 in tRNAs. The sequence is that of Probable dual-specificity RNA methyltransferase RlmN from Thermotoga neapolitana (strain ATCC 49049 / DSM 4359 / NBRC 107923 / NS-E).